The sequence spans 304 residues: Heme A synthase (304 aa).

The Cytoplasmic segment spans residues 1–8; that stretch reads MFNKRNLK. A helical transmembrane segment spans residues 9–29; it reads WLSVLATIIMAFVQLGGALVT. Residues 30–67 lie on the Extracellular side of the membrane; it reads KTGSEDGCGSSWPLCHGALLPQNLPIDTIIELSHRAVS. An intrachain disulfide couples C37 to C44. The active site involves E60. H63 is a heme o binding site. A helical transmembrane segment spans residues 68–88; it reads GLSLIVVLWLAITAWKHIGYI. Residues 89–93 lie on the Cytoplasmic side of the membrane; it reads REVKP. A helical membrane pass occupies residues 94-114; it reads LAIISIAFLLVQALIGAAAVI. Topologically, residues 115–123 are extracellular; sequence WQQNSYVLA. The helical transmembrane segment at 124 to 144 threads the bilayer; sequence LHFGISLISFSSVFVLMLIIF. A heme o-binding site is contributed by H125. Over 145-163 the chain is Cytoplasmic; that stretch reads EVDKKYEADELYIRKPLRR. The helical transmembrane segment at 164 to 184 threads the bilayer; it reads LTWIMTGIVYLTIYTGALVRH. The Extracellular segment spans residues 185-215; it reads AKASLAYGGWPLPFHDIIPHTEQDWVQFAHR. H214 lines the heme b pocket. A helical transmembrane segment spans residues 216 to 236; the sequence is GMAFITFFWIMITFIHAVKNY. Residues 237–244 are Cytoplasmic-facing; that stretch reads SENRTIRY. The chain crosses the membrane as a helical span at residues 245–265; sequence GYTTAFILIILQVITGALSVM. Over 266-270 the chain is Extracellular; that stretch reads TNVNL. The chain crosses the membrane as a helical span at residues 271–291; it reads FIALLHALFITILFGMIAYFI. H276 provides a ligand contact to heme b. Residues 292–304 are Cytoplasmic-facing; the sequence is MLMLRTIRSEKIK.

It belongs to the COX15/CtaA family. Type 1 subfamily. As to quaternary structure, interacts with CtaB. Requires heme b as cofactor.

It is found in the cell membrane. The catalysed reaction is Fe(II)-heme o + 2 A + H2O = Fe(II)-heme a + 2 AH2. It functions in the pathway porphyrin-containing compound metabolism; heme A biosynthesis; heme A from heme O: step 1/1. In terms of biological role, catalyzes the conversion of heme O to heme A by two successive hydroxylations of the methyl group at C8. The first hydroxylation forms heme I, the second hydroxylation results in an unstable dihydroxymethyl group, which spontaneously dehydrates, resulting in the formyl group of heme A. The chain is Heme A synthase from Staphylococcus haemolyticus (strain JCSC1435).